We begin with the raw amino-acid sequence, 54 residues long: ATP synthase protein 8 (54 aa).

The helical transmembrane segment at 8 to 28 (WWLLNFFLGWTSLLVIFIILL) threads the bilayer.

The protein belongs to the ATPase protein 8 family. In terms of assembly, F-type ATPases have 2 components, CF(1) - the catalytic core - and CF(0) - the membrane proton channel.

The protein localises to the mitochondrion membrane. In terms of biological role, mitochondrial membrane ATP synthase (F(1)F(0) ATP synthase or Complex V) produces ATP from ADP in the presence of a proton gradient across the membrane which is generated by electron transport complexes of the respiratory chain. F-type ATPases consist of two structural domains, F(1) - containing the extramembraneous catalytic core and F(0) - containing the membrane proton channel, linked together by a central stalk and a peripheral stalk. During catalysis, ATP synthesis in the catalytic domain of F(1) is coupled via a rotary mechanism of the central stalk subunits to proton translocation. Part of the complex F(0) domain. Minor subunit located with subunit a in the membrane. This Patiria pectinifera (Starfish) protein is ATP synthase protein 8 (MT-ATP8).